We begin with the raw amino-acid sequence, 36 residues long: Pancreatic polypeptide (36 aa).

The residue at position 36 (Y36) is a Tyrosine amide.

This sequence belongs to the NPY family.

It is found in the secreted. Functionally, hormone secreted by pancreatic cells that acts as a regulator of pancreatic and gastrointestinal functions. The polypeptide is Pancreatic polypeptide (PPY) (Meleagris gallopavo (Wild turkey)).